A 430-amino-acid polypeptide reads, in one-letter code: Adenylosuccinate synthetase (430 aa).

GTP-binding positions include 13–19 (GDEGKGK) and 41–43 (GHT). D14 functions as the Proton acceptor in the catalytic mechanism. Residues D14 and G41 each coordinate Mg(2+). Residues 14–17 (DEGK), 39–42 (NAGH), T130, R144, Q225, T240, and R304 each bind IMP. H42 (proton donor) is an active-site residue. 300–306 (STTGRAR) serves as a coordination point for substrate. GTP contacts are provided by residues R306, 332 to 334 (KLD), and 414 to 416 (STG).

This sequence belongs to the adenylosuccinate synthetase family. Homodimer. The cofactor is Mg(2+).

It is found in the cytoplasm. The enzyme catalyses IMP + L-aspartate + GTP = N(6)-(1,2-dicarboxyethyl)-AMP + GDP + phosphate + 2 H(+). Its pathway is purine metabolism; AMP biosynthesis via de novo pathway; AMP from IMP: step 1/2. Functionally, plays an important role in the de novo pathway of purine nucleotide biosynthesis. Catalyzes the first committed step in the biosynthesis of AMP from IMP. This Thioalkalivibrio sulfidiphilus (strain HL-EbGR7) protein is Adenylosuccinate synthetase.